A 213-amino-acid chain; its full sequence is Probable nicotinate-nucleotide adenylyltransferase (213 aa).

This sequence belongs to the NadD family.

The enzyme catalyses nicotinate beta-D-ribonucleotide + ATP + H(+) = deamido-NAD(+) + diphosphate. It participates in cofactor biosynthesis; NAD(+) biosynthesis; deamido-NAD(+) from nicotinate D-ribonucleotide: step 1/1. Catalyzes the reversible adenylation of nicotinate mononucleotide (NaMN) to nicotinic acid adenine dinucleotide (NaAD). The protein is Probable nicotinate-nucleotide adenylyltransferase of Ruegeria pomeroyi (strain ATCC 700808 / DSM 15171 / DSS-3) (Silicibacter pomeroyi).